Reading from the N-terminus, the 243-residue chain is Probable fructoselysine utilization operon transcriptional repressor (243 aa).

The HTH gntR-type domain occupies 10 to 78 (QLLYATVRQR…QGKGTFVQSQ (69 aa)). Positions 38–57 (ENELCTQYNVSRITIRKAIS) form a DNA-binding region, H-T-H motif.

Its pathway is carbohydrate metabolism; fructoselysine degradation [regulation]. Its function is as follows. May regulate the transcription of the frlABCDR operon, involved in the utilization of fructoselysine and psicoselysine. This is Probable fructoselysine utilization operon transcriptional repressor from Escherichia coli (strain K12).